A 371-amino-acid chain; its full sequence is Beta sliding clamp (371 aa).

The protein belongs to the beta sliding clamp family. In terms of assembly, forms a ring-shaped head-to-tail homodimer around DNA which binds and tethers DNA polymerases and other proteins to the DNA. The DNA replisome complex has a single clamp-loading complex (3 tau and 1 each of delta, delta', psi and chi subunits) which binds 3 Pol III cores (1 core on the leading strand and 2 on the lagging strand) each with a beta sliding clamp dimer. Additional proteins in the replisome are other copies of gamma, psi and chi, Ssb, DNA helicase and RNA primase.

The protein resides in the cytoplasm. Its function is as follows. Confers DNA tethering and processivity to DNA polymerases and other proteins. Acts as a clamp, forming a ring around DNA (a reaction catalyzed by the clamp-loading complex) which diffuses in an ATP-independent manner freely and bidirectionally along dsDNA. Initially characterized for its ability to contact the catalytic subunit of DNA polymerase III (Pol III), a complex, multichain enzyme responsible for most of the replicative synthesis in bacteria; Pol III exhibits 3'-5' exonuclease proofreading activity. The beta chain is required for initiation of replication as well as for processivity of DNA replication. This chain is Beta sliding clamp (dnaN), found in Treponema pallidum (strain Nichols).